The following is a 494-amino-acid chain: uncharacterized protein (494 aa).

This is an uncharacterized protein from Magallana gigas (Pacific oyster).